A 403-amino-acid chain; its full sequence is Acetylornithine aminotransferase (403 aa).

Pyridoxal 5'-phosphate-binding positions include 101 to 102 (GA) and Phe-134. N(2)-acetyl-L-ornithine is bound at residue Arg-137. 219–222 (DEVQ) is a binding site for pyridoxal 5'-phosphate. An N6-(pyridoxal phosphate)lysine modification is found at Lys-248. A N(2)-acetyl-L-ornithine-binding site is contributed by Thr-276. Residue Thr-277 coordinates pyridoxal 5'-phosphate.

Belongs to the class-III pyridoxal-phosphate-dependent aminotransferase family. ArgD subfamily. In terms of assembly, homodimer. It depends on pyridoxal 5'-phosphate as a cofactor.

It localises to the cytoplasm. It carries out the reaction N(2)-acetyl-L-ornithine + 2-oxoglutarate = N-acetyl-L-glutamate 5-semialdehyde + L-glutamate. The protein operates within amino-acid biosynthesis; L-arginine biosynthesis; N(2)-acetyl-L-ornithine from L-glutamate: step 4/4. In Brucella melitensis biotype 1 (strain ATCC 23456 / CCUG 17765 / NCTC 10094 / 16M), this protein is Acetylornithine aminotransferase.